Consider the following 354-residue polypeptide: MEKFQAAMLLGAVGDALGFGHAARESSSLGARVQEEMGKGGGLDHLVLSPETWPVSDNTIMHMSTAGALITDFWCLDDLYREMVRRYVDVLEKLPEQRADPATLEGCSQLKPDNYLLAWHTPFNEKGSGFGAATKAMCVGMRYWQPERLETLVEVSVECGRMTHNHPTGFLGSLCTALFASYAVQGKRLEQWGRDMLRTVPLAEEYCKKTIRHLAEYQEHWFYFEAKWQFYLEERKIIEDTENEASFPDRYDAEEREKTYRKWSSEGRGGRRGHDAPMIAYDALLGAKGSWTELCRRAMFHGGESGATGAIAGCLFGLLHGLDAVPAGLYRELEHQDELRRLGEALHRLSSQEK.

Residue serine 27 is modified to Phosphoserine.

This sequence belongs to the ADP-ribosylglycohydrolase family.

Its subcellular location is the cytoplasm. The protein localises to the myofibril. It is found in the sarcomere. Functionally, required for myofibril assembly and outgrowth of the cardiac chambers in the developing heart. Appears to be catalytically inactive, showing no activity against O-acetyl-ADP-ribose. This Bos taurus (Bovine) protein is Inactive ADP-ribosyltransferase ARH2 (ADPRHL1).